The chain runs to 4423 residues: Nonribosomal peptide synthetase 7 (4423 aa).

The condensation 1 stretch occupies residues 572–986 (NIYPCTSIQE…LISQDDKNRI (415 aa)). The adenylation 1 stretch occupies residues 1007–1404 (ERIQKQPSAV…GRRDTQVKIR (398 aa)). The Carrier 1 domain occupies 1533–1609 (LPLTETEQKL…DLARTIDERN (77 aa)). O-(pantetheine 4'-phosphoryl)serine is present on Ser-1570. Residues 1657–2066 (EDVYPCTSLQ…QFLDETHHET (410 aa)) form a condensation 2 region. The tract at residues 2102-2499 (RDVAKEQPDS…YIGRMGSEVK (398 aa)) is adenylation 2. The Carrier 2 domain maps to 2642–2718 (VPQTRIGKKL…DCARILEADQ (77 aa)). O-(pantetheine 4'-phosphoryl)serine is present on Ser-2679. The condensation 3 stretch occupies residues 2764-3170 (EDVYPCTPMQ…AASASSDDQT (407 aa)). Residues 3205–3609 (RSLETRPDSQ…GRGDSQIKIR (405 aa)) form an adenylation 3 region. Positions 3731 to 3804 (TESEYITRTL…KMAVVAQHQT (74 aa)) constitute a Carrier 3 domain. Ser-3765 is subject to O-(pantetheine 4'-phosphoryl)serine. The interval 3875–4278 (TFVLDAEGDL…SQDEKLALLG (404 aa)) is condensation 4. The segment covering 4288–4300 (KLTKLQRVNSPKE) has biased composition (polar residues). The interval 4288 to 4312 (KLTKLQRVNSPKEQTLRKDKPTNGV) is disordered.

Belongs to the NRP synthetase family.

The protein operates within secondary metabolite biosynthesis. Functionally, nonribosomal peptide synthetase; part of the gene cluster that mediates the biosynthesis of the lipopeptide fusaristatin A. Fusaristatin A consists of a polyketide chain linked to three amino acid residues glutamine (Gln), dehydroalanine (dehydro-Ala), and beta-aminoisobutyric acid. The biosynthesis starts with formation of a linear polyketide chain by the highly reducing polyketide synthase PKS6. The gene cluster does not contain an acyl-CoA ligase or an acyl-transferase, and it is therefore predicted that the polyketide is transferred directly to the nonribosomal peptide synthetase NRPS7. Modules 1-3 from NRPS7 incorporate dehydro-Ala, Gln, and beta-aminoisobutyric acid in the compound, which is released by cyclization. The beta-aminoisobutyric acid units are most likely not freely available to the NRPS, but can be synthesized from thymine, which requires a dehydrogenase, a monooxygenase, and an aminotransferase. The fusaristatin A cluster contains a cytochrome P450 monooxygenase (FGSG_08207) and an aminotransferase (FGSG_17085), which theoretically can perform two of the enzymatic steps. The enzymes may however also be involved in biosynthesis of dehydroalanine or modification of the polyketide. The dehydro-Ala residue can be a result of cyclization, where serine is dehydrated. The last gene of the cluster encodes a protein with an A/B barrel domain found in variable enzymes, which hampers functional prediction. The protein is Nonribosomal peptide synthetase 7 of Gibberella zeae (strain ATCC MYA-4620 / CBS 123657 / FGSC 9075 / NRRL 31084 / PH-1) (Wheat head blight fungus).